The chain runs to 162 residues: Transcription elongation factor GreA (162 aa).

Residues N45–L65 are a coiled coil.

Belongs to the GreA/GreB family.

In terms of biological role, necessary for efficient RNA polymerase transcription elongation past template-encoded arresting sites. The arresting sites in DNA have the property of trapping a certain fraction of elongating RNA polymerases that pass through, resulting in locked ternary complexes. Cleavage of the nascent transcript by cleavage factors such as GreA or GreB allows the resumption of elongation from the new 3'terminus. GreA releases sequences of 2 to 3 nucleotides. The polypeptide is Transcription elongation factor GreA (Wolinella succinogenes (strain ATCC 29543 / DSM 1740 / CCUG 13145 / JCM 31913 / LMG 7466 / NCTC 11488 / FDC 602W) (Vibrio succinogenes)).